Reading from the N-terminus, the 262-residue chain is WW domain-binding protein 2 (262 aa).

A GRAM domain is found at 1–84 (MALNKNHSEG…YLMKDCEVKQ (84 aa)). The residue at position 192 (Tyr-192) is a Phosphotyrosine. The PPxY motif 1 motif lies at 196-200 (PPPPY). The segment covering 197-206 (PPPYPGPMEP) has biased composition (pro residues). The interval 197–262 (PPPYPGPMEP…YYPPEDKKTQ (66 aa)) is disordered. The segment covering 219 to 231 (AAEAKAAEAAASA) has biased composition (low complexity). Residue Tyr-232 is modified to Phosphotyrosine. Residues 246-255 (SQPPPPPYYP) show a composition bias toward pro residues. Positions 249–253 (PPPPY) match the PPxY motif 2 motif.

In terms of assembly, binds to the WW domain of YAP1, WWP1 and WWP2. Interacts with NEDD4. Interacts with ESR1 and UBE3A. Post-translationally, phosphorylated in repsonse to EGF as well as estrogen and progesterone hormones. Tyr-192 and Tyr-232 are phosphorylated by YES and SRC inducing nuclear translocation.

Its subcellular location is the cytoplasm. It localises to the nucleus. Its function is as follows. Acts as a transcriptional coactivator of estrogen and progesterone receptors (ESR1 and PGR) upon hormone activation. In presence of estrogen, binds to ESR1-responsive promoters. Synergizes with YAP1 to enhance PGR activity. Modulates expression of post-synaptic scaffolding proteins via regulation of ESR1, ESR2 and PGR. In Rattus norvegicus (Rat), this protein is WW domain-binding protein 2 (Wbp2).